Consider the following 1011-residue polypeptide: DNA-directed RNA polymerase 2, chloroplastic/mitochondrial (1011 aa).

Positions 307 to 326 are disordered; sequence KGDDNEESGGVENETSMKEQ. Active-site residues include Asp712, Lys787, and Asp944.

The protein belongs to the phage and mitochondrial RNA polymerase family. As to quaternary structure, interacts with NIP1 and NIP2.

It is found in the plastid. The protein resides in the chloroplast. Its subcellular location is the mitochondrion. The enzyme catalyses RNA(n) + a ribonucleoside 5'-triphosphate = RNA(n+1) + diphosphate. In terms of biological role, DNA-dependent RNA polymerase catalyzes the transcription of DNA into RNA using the four ribonucleoside triphosphates as substrates. In Arabidopsis thaliana (Mouse-ear cress), this protein is DNA-directed RNA polymerase 2, chloroplastic/mitochondrial (RPOT2).